Reading from the N-terminus, the 343-residue chain is Holliday junction branch migration complex subunit RuvB (343 aa).

Residues 1-26 (MKEKILTFSSDPSSPVTRHETEEDTG) form a disordered region. Residues 3–193 (EKILTFSSDP…FGIFRKFDFY (191 aa)) form a large ATPase domain (RuvB-L) region. The segment covering 7–16 (TFSSDPSSPV) has biased composition (polar residues). Residues Leu32, Arg33, Gly74, Lys77, Thr78, Thr79, 140 to 142 (EDF), Arg183, Tyr193, and Arg230 contribute to the ATP site. Thr78 is a binding site for Mg(2+). Residues 194-264 (SRQDLARIVS…AIDDALALEG (71 aa)) are small ATPAse domain (RuvB-S). The segment at 267–343 (EKGLTGLDRS…YRHLGVQWRG (77 aa)) is head domain (RuvB-H). Residues Arg322 and Arg327 each coordinate DNA.

Belongs to the RuvB family. In terms of assembly, homohexamer. Forms an RuvA(8)-RuvB(12)-Holliday junction (HJ) complex. HJ DNA is sandwiched between 2 RuvA tetramers; dsDNA enters through RuvA and exits via RuvB. An RuvB hexamer assembles on each DNA strand where it exits the tetramer. Each RuvB hexamer is contacted by two RuvA subunits (via domain III) on 2 adjacent RuvB subunits; this complex drives branch migration. In the full resolvosome a probable DNA-RuvA(4)-RuvB(12)-RuvC(2) complex forms which resolves the HJ.

It is found in the cytoplasm. The enzyme catalyses ATP + H2O = ADP + phosphate + H(+). Functionally, the RuvA-RuvB-RuvC complex processes Holliday junction (HJ) DNA during genetic recombination and DNA repair, while the RuvA-RuvB complex plays an important role in the rescue of blocked DNA replication forks via replication fork reversal (RFR). RuvA specifically binds to HJ cruciform DNA, conferring on it an open structure. The RuvB hexamer acts as an ATP-dependent pump, pulling dsDNA into and through the RuvAB complex. RuvB forms 2 homohexamers on either side of HJ DNA bound by 1 or 2 RuvA tetramers; 4 subunits per hexamer contact DNA at a time. Coordinated motions by a converter formed by DNA-disengaged RuvB subunits stimulates ATP hydrolysis and nucleotide exchange. Immobilization of the converter enables RuvB to convert the ATP-contained energy into a lever motion, pulling 2 nucleotides of DNA out of the RuvA tetramer per ATP hydrolyzed, thus driving DNA branch migration. The RuvB motors rotate together with the DNA substrate, which together with the progressing nucleotide cycle form the mechanistic basis for DNA recombination by continuous HJ branch migration. Branch migration allows RuvC to scan DNA until it finds its consensus sequence, where it cleaves and resolves cruciform DNA. This chain is Holliday junction branch migration complex subunit RuvB, found in Desulfosudis oleivorans (strain DSM 6200 / JCM 39069 / Hxd3) (Desulfococcus oleovorans).